The sequence spans 340 residues: Pseudaminic acid synthase (340 aa).

The AFP-like domain occupies 281–337 (SLFVIKDIQKGEALTENNIKALRPNLGLHPKFYKEILGQKASKFLKANTPLSADDIE).

It belongs to the pseudaminic acid synthase family. Requires a divalent metal cation as cofactor.

It carries out the reaction 2,4-diacetamido-2,4,6-trideoxy-beta-L-altrose + phosphoenolpyruvate + H2O = pseudaminate + phosphate. Functionally, catalyzes the fifth step in the biosynthesis of pseudaminic acid, a sialic-acid-like sugar that is used to modify flagellin. Catalyzes the condensation of phosphoenolpyruvate with 2,4-diacetamido-2,4,6-trideoxy-beta-l-altropyranose, forming pseudaminic acid. This is Pseudaminic acid synthase (pseI) from Helicobacter pylori (strain ATCC 700392 / 26695) (Campylobacter pylori).